A 407-amino-acid chain; its full sequence is tRNA N6-adenosine threonylcarbamoyltransferase, mitochondrial (407 aa).

The transit peptide at 1-30 (MISIKGTGRFLLDNYRIWQRRAFNRPIQLR) directs the protein to the mitochondrion. Residues H145 and H149 each coordinate a divalent metal cation. Substrate is bound by residues 170 to 174 (LVSGG), D203, A217, E221, 328 to 329 (SN), and S360. Position 361 (D361) interacts with a divalent metal cation.

This sequence belongs to the KAE1 / TsaD family. Homodimer. A divalent metal cation serves as cofactor.

The protein localises to the mitochondrion. The enzyme catalyses L-threonylcarbamoyladenylate + adenosine(37) in tRNA = N(6)-L-threonylcarbamoyladenosine(37) in tRNA + AMP + H(+). Its function is as follows. Required for the formation of a threonylcarbamoyl group on adenosine at position 37 (t(6)A37) in mitochondrial tRNAs that read codons beginning with adenine. Probably involved in the transfer of the threonylcarbamoyl moiety of threonylcarbamoyl-AMP (TC-AMP) to the N6 group of A37. Involved in mitochondrial genome maintenance. The protein is tRNA N6-adenosine threonylcarbamoyltransferase, mitochondrial (QRI7) of Saccharomyces cerevisiae (strain ATCC 204508 / S288c) (Baker's yeast).